The chain runs to 1292 residues: DNA-directed RNA polymerase subunit beta' (1292 aa).

4 residues coordinate Zn(2+): C70, C72, C85, and C88. 3 residues coordinate Mg(2+): D532, D534, and D536. Residues C911, C987, C994, and C997 each coordinate Zn(2+).

It belongs to the RNA polymerase beta' chain family. As to quaternary structure, the RNAP catalytic core consists of 2 alpha, 1 beta, 1 beta' and 1 omega subunit. When a sigma factor is associated with the core the holoenzyme is formed, which can initiate transcription. The cofactor is Mg(2+). It depends on Zn(2+) as a cofactor.

The enzyme catalyses RNA(n) + a ribonucleoside 5'-triphosphate = RNA(n+1) + diphosphate. DNA-dependent RNA polymerase catalyzes the transcription of DNA into RNA using the four ribonucleoside triphosphates as substrates. The sequence is that of DNA-directed RNA polymerase subunit beta' from Mycoplasma genitalium (strain ATCC 33530 / DSM 19775 / NCTC 10195 / G37) (Mycoplasmoides genitalium).